A 210-amino-acid chain; its full sequence is MIHDKVFKGTTTVGLVCKDGVVLATEKRATMGNFIASRRAKKIYKITDRIAMTTAGSVGDAQFLARLIKVETNLYTIRKEEEPTVKAVATLVSNLLNSVRYFPYLVQLLIGGVDKTGAKIYSIDPIGGAIEEIDIVATGSGSPMAYGVLEDNYRKDINVDEAVELAIRAIYSAMKRDSASGDGIDVVKITEKEYVELTPEEIEAILEKLR.

A propeptide spans 1–9 (MIHDKVFKG) (removed in mature form; by autocatalysis). Thr-10 acts as the Nucleophile in catalysis.

The protein belongs to the peptidase T1B family. In terms of assembly, the 20S proteasome core is composed of 14 alpha and 14 beta subunits that assemble into four stacked heptameric rings, resulting in a barrel-shaped structure. The two inner rings, each composed of seven catalytic beta subunits, are sandwiched by two outer rings, each composed of seven alpha subunits. The catalytic chamber with the active sites is on the inside of the barrel. Has a gated structure, the ends of the cylinder being occluded by the N-termini of the alpha-subunits. Is capped at one or both ends by the proteasome regulatory ATPase, PAN.

The protein localises to the cytoplasm. It catalyses the reaction Cleavage of peptide bonds with very broad specificity.. With respect to regulation, the formation of the proteasomal ATPase PAN-20S proteasome complex, via the docking of the C-termini of PAN into the intersubunit pockets in the alpha-rings, triggers opening of the gate for substrate entry. Interconversion between the open-gate and close-gate conformations leads to a dynamic regulation of the 20S proteasome proteolysis activity. Its function is as follows. Component of the proteasome core, a large protease complex with broad specificity involved in protein degradation. The polypeptide is Proteasome subunit beta (Ferroglobus placidus (strain DSM 10642 / AEDII12DO)).